The sequence spans 478 residues: UDP-N-acetylmuramate--L-alanine ligase (478 aa).

Residue 122–128 participates in ATP binding; the sequence is GTHGKTT.

The protein belongs to the MurCDEF family.

It is found in the cytoplasm. It carries out the reaction UDP-N-acetyl-alpha-D-muramate + L-alanine + ATP = UDP-N-acetyl-alpha-D-muramoyl-L-alanine + ADP + phosphate + H(+). It participates in cell wall biogenesis; peptidoglycan biosynthesis. In terms of biological role, cell wall formation. The chain is UDP-N-acetylmuramate--L-alanine ligase from Stenotrophomonas maltophilia (strain R551-3).